We begin with the raw amino-acid sequence, 426 residues long: Anhydromevalonate phosphate decarboxylase (426 aa).

The Mn(2+) site is built by Asn148 and Glu211. Catalysis depends on Asp255, which acts as the Proton acceptor.

It belongs to the UbiD family. The cofactor is prenylated FMN. Mn(2+) is required as a cofactor.

The catalysed reaction is (2E)-3-methyl-5-phosphooxypent-2-enoate + H(+) = isopentenyl phosphate + CO2. It functions in the pathway isoprenoid biosynthesis; isopentenyl diphosphate biosynthesis via mevalonate pathway. Its function is as follows. Catalyzes the conversion of trans-anhydromevalonate 5-phosphate (tAHMP) into isopentenyl phosphate. Involved in the archaeal mevalonate (MVA) pathway, which provides fundamental precursors for isoprenoid biosynthesis, such as isopentenyl diphosphate (IPP) and dimethylallyl diphosphate (DMAPP). The chain is Anhydromevalonate phosphate decarboxylase from Archaeoglobus fulgidus (strain ATCC 49558 / DSM 4304 / JCM 9628 / NBRC 100126 / VC-16).